Reading from the N-terminus, the 424-residue chain is Histidine--tRNA ligase (424 aa).

Belongs to the class-II aminoacyl-tRNA synthetase family. Homodimer.

The protein localises to the cytoplasm. The enzyme catalyses tRNA(His) + L-histidine + ATP = L-histidyl-tRNA(His) + AMP + diphosphate + H(+). The polypeptide is Histidine--tRNA ligase (Escherichia coli (strain SE11)).